Here is an 84-residue protein sequence, read N- to C-terminus: Small ribosomal subunit protein uS17 (84 aa).

The protein belongs to the universal ribosomal protein uS17 family. In terms of assembly, part of the 30S ribosomal subunit.

Functionally, one of the primary rRNA binding proteins, it binds specifically to the 5'-end of 16S ribosomal RNA. The protein is Small ribosomal subunit protein uS17 of Yersinia enterocolitica serotype O:8 / biotype 1B (strain NCTC 13174 / 8081).